We begin with the raw amino-acid sequence, 131 residues long: Small ribosomal subunit protein uS8 (131 aa).

The segment at 1 to 27 (MSMTDPVADMLTRIRNGQRASKNEVSM) is disordered.

The protein belongs to the universal ribosomal protein uS8 family. In terms of assembly, part of the 30S ribosomal subunit. Contacts proteins S5 and S12.

One of the primary rRNA binding proteins, it binds directly to 16S rRNA central domain where it helps coordinate assembly of the platform of the 30S subunit. This chain is Small ribosomal subunit protein uS8, found in Thioalkalivibrio sulfidiphilus (strain HL-EbGR7).